A 111-amino-acid polypeptide reads, in one-letter code: FK506-binding protein 1 (111 aa).

The interval 1–20 is disordered; the sequence is MGVEKTIITQGSGPSPQVGQ. Over residues 7–20 the composition is skewed to polar residues; that stretch reads IITQGSGPSPQVGQ. The region spanning 19 to 111 is the PPIase FKBP-type domain; it reads GQKVTMEYTG…IFDVELKKIG (93 aa).

Belongs to the FKBP-type PPIase family. FKBP1 subfamily.

It is found in the cytoplasm. The enzyme catalyses [protein]-peptidylproline (omega=180) = [protein]-peptidylproline (omega=0). Its activity is regulated as follows. Inhibited by both FK506 and rapamycin. Functionally, PPIases accelerate the folding of proteins. It catalyzes the cis-trans isomerization of proline imidic peptide bonds in oligopeptides. This is FK506-binding protein 1 (FPR1) from Gibberella zeae (strain ATCC MYA-4620 / CBS 123657 / FGSC 9075 / NRRL 31084 / PH-1) (Wheat head blight fungus).